A 537-amino-acid polypeptide reads, in one-letter code: O-phosphoserine--tRNA(Cys) ligase (537 aa).

Substrate is bound by residues 186–188 (HMT), 231–233 (SAS), 273–274 (YY), and N317.

This sequence belongs to the class-II aminoacyl-tRNA synthetase family. O-phosphoseryl-tRNA(Cys) synthetase subfamily. As to quaternary structure, homotetramer. Interacts with SepCysS.

It catalyses the reaction tRNA(Cys) + O-phospho-L-serine + ATP = O-phospho-L-seryl-tRNA(Cys) + AMP + diphosphate. Catalyzes the attachment of O-phosphoserine (Sep) to tRNA(Cys). The sequence is that of O-phosphoserine--tRNA(Cys) ligase from Methanococcus maripaludis (strain C5 / ATCC BAA-1333).